Reading from the N-terminus, the 140-residue chain is MNLEALCKEAGLSFYDDELVSENGKKIYRVYVQKEGGVKLDDCARLSEILSPIFDVEPPVSGEYFLEVSSCGLERKLSKIEHFAKSINELVKITTSEKEKIEAKIVSVDDENITLENLKTQEKTTLKFSDIRKARTFVEW.

Belongs to the RimP family.

Its subcellular location is the cytoplasm. Required for maturation of 30S ribosomal subunits. The protein is Ribosome maturation factor RimP of Campylobacter lari (strain RM2100 / D67 / ATCC BAA-1060).